We begin with the raw amino-acid sequence, 308 residues long: Aspartate carbamoyltransferase catalytic subunit (308 aa).

Carbamoyl phosphate-binding residues include Arg57 and Thr58. Position 86 (Lys86) interacts with L-aspartate. Residues Arg107, His135, and Gln138 each contribute to the carbamoyl phosphate site. Residues Arg167 and Arg228 each coordinate L-aspartate. The carbamoyl phosphate site is built by Leu267 and Pro268.

The protein belongs to the aspartate/ornithine carbamoyltransferase superfamily. ATCase family. In terms of assembly, heterooligomer of catalytic and regulatory chains.

The catalysed reaction is carbamoyl phosphate + L-aspartate = N-carbamoyl-L-aspartate + phosphate + H(+). The protein operates within pyrimidine metabolism; UMP biosynthesis via de novo pathway; (S)-dihydroorotate from bicarbonate: step 2/3. In terms of biological role, catalyzes the condensation of carbamoyl phosphate and aspartate to form carbamoyl aspartate and inorganic phosphate, the committed step in the de novo pyrimidine nucleotide biosynthesis pathway. The chain is Aspartate carbamoyltransferase catalytic subunit from Methanosarcina barkeri (strain Fusaro / DSM 804).